The following is a 533-amino-acid chain: Peptide chain release factor 3 (533 aa).

The region spanning 9 to 284 (ARRRTFAIIS…ALCQLSPPPL (276 aa)) is the tr-type G domain. Residues 18 to 25 (SHPDAGKT), 95 to 99 (DTPGH), and 149 to 152 (NKLD) each bind GTP.

Belongs to the TRAFAC class translation factor GTPase superfamily. Classic translation factor GTPase family. PrfC subfamily.

The protein resides in the cytoplasm. Its function is as follows. Increases the formation of ribosomal termination complexes and stimulates activities of RF-1 and RF-2. It binds guanine nucleotides and has strong preference for UGA stop codons. It may interact directly with the ribosome. The stimulation of RF-1 and RF-2 is significantly reduced by GTP and GDP, but not by GMP. In Cupriavidus pinatubonensis (strain JMP 134 / LMG 1197) (Cupriavidus necator (strain JMP 134)), this protein is Peptide chain release factor 3.